We begin with the raw amino-acid sequence, 419 residues long: Putative competence-damage inducible protein (419 aa).

It belongs to the CinA family.

This is Putative competence-damage inducible protein from Streptococcus agalactiae serotype Ia (strain ATCC 27591 / A909 / CDC SS700).